A 281-amino-acid polypeptide reads, in one-letter code: Pantothenate synthetase (281 aa).

Residue 30 to 37 participates in ATP binding; that stretch reads MGALHHGH. Catalysis depends on His-37, which acts as the Proton donor. Gln-61 contributes to the (R)-pantoate binding site. Residue Gln-61 participates in beta-alanine binding. Residue 147-150 coordinates ATP; the sequence is GEKD. Gln-153 provides a ligand contact to (R)-pantoate. ATP is bound by residues Leu-176 and 184–187; that span reads SSSR.

This sequence belongs to the pantothenate synthetase family. Homodimer.

It localises to the cytoplasm. It carries out the reaction (R)-pantoate + beta-alanine + ATP = (R)-pantothenate + AMP + diphosphate + H(+). Its pathway is cofactor biosynthesis; (R)-pantothenate biosynthesis; (R)-pantothenate from (R)-pantoate and beta-alanine: step 1/1. In terms of biological role, catalyzes the condensation of pantoate with beta-alanine in an ATP-dependent reaction via a pantoyl-adenylate intermediate. The polypeptide is Pantothenate synthetase (Bartonella bacilliformis (strain ATCC 35685 / KC583 / Herrer 020/F12,63)).